A 740-amino-acid chain; its full sequence is NAD(P)H-quinone oxidoreductase subunit 5, chloroplastic (740 aa).

16 helical membrane-spanning segments follow: residues 9 to 29, 40 to 60, 89 to 109, 125 to 145, 147 to 167, 185 to 205, 221 to 241, 258 to 278, 283 to 303, 327 to 347, 354 to 374, 396 to 416, 425 to 445, 547 to 567, 606 to 626, and 718 to 738; these read WIIP…LLLF, WSFL…YLSI, IDPL…LVLI, FAYM…SNLI, IYFF…FWFT, GDFG…SFEF, VNLL…IAKS, TPIS…FLVA, LFIV…ITIL, LGYM…FHLI, ALLF…VGYS, TAFL…CFWS, LLFS…TAFY, ILFP…IGIP, FSVS…KPFY, and ISSY…FLKI.

Belongs to the complex I subunit 5 family. In terms of assembly, NDH is composed of at least 16 different subunits, 5 of which are encoded in the nucleus.

Its subcellular location is the plastid. It is found in the chloroplast thylakoid membrane. The enzyme catalyses a plastoquinone + NADH + (n+1) H(+)(in) = a plastoquinol + NAD(+) + n H(+)(out). It catalyses the reaction a plastoquinone + NADPH + (n+1) H(+)(in) = a plastoquinol + NADP(+) + n H(+)(out). Its function is as follows. NDH shuttles electrons from NAD(P)H:plastoquinone, via FMN and iron-sulfur (Fe-S) centers, to quinones in the photosynthetic chain and possibly in a chloroplast respiratory chain. The immediate electron acceptor for the enzyme in this species is believed to be plastoquinone. Couples the redox reaction to proton translocation, and thus conserves the redox energy in a proton gradient. This Aethionema cordifolium (Lebanon stonecress) protein is NAD(P)H-quinone oxidoreductase subunit 5, chloroplastic (ndhF).